Here is an 88-residue protein sequence, read N- to C-terminus: Small ribosomal subunit protein bS20 (88 aa).

Residues 1 to 21 (MANSKSAKKRALQSEKRRQHN) are compositionally biased toward basic residues. Positions 1–27 (MANSKSAKKRALQSEKRRQHNASRSSM) are disordered.

The protein belongs to the bacterial ribosomal protein bS20 family.

In terms of biological role, binds directly to 16S ribosomal RNA. In Shewanella piezotolerans (strain WP3 / JCM 13877), this protein is Small ribosomal subunit protein bS20.